A 327-amino-acid polypeptide reads, in one-letter code: Nucleotide-binding protein Mflv_3714 (327 aa).

Residues 1 to 22 (MTRQGMRDDLRGEADSVVHDGT) show a composition bias toward basic and acidic residues. Residues 1 to 29 (MTRQGMRDDLRGEADSVVHDGTDDIDNEN) are disordered. Residue 50-57 (GLSGAGRG) coordinates ATP. Residue 101–104 (DVRS) participates in GTP binding.

The protein belongs to the RapZ-like family.

Its function is as follows. Displays ATPase and GTPase activities. This is Nucleotide-binding protein Mflv_3714 from Mycolicibacterium gilvum (strain PYR-GCK) (Mycobacterium gilvum (strain PYR-GCK)).